Consider the following 364-residue polypeptide: DNA replication and repair protein RecF (364 aa).

30 to 37 (GKNAQGKT) serves as a coordination point for ATP.

The protein belongs to the RecF family.

The protein resides in the cytoplasm. In terms of biological role, the RecF protein is involved in DNA metabolism; it is required for DNA replication and normal SOS inducibility. RecF binds preferentially to single-stranded, linear DNA. It also seems to bind ATP. The sequence is that of DNA replication and repair protein RecF from Geotalea uraniireducens (strain Rf4) (Geobacter uraniireducens).